The primary structure comprises 324 residues: MSVEDGGMPGLARPKQARWTLMLFLSTAMYGAHAPFLALCHVDGRVPFRPSSAVLLTELTKLLLCAFSLLVGWQTWPQGTPPWRQAAPFALSALLYGANNNLVIYLQRYMDPSTYQVLSNLKIGSTALLYCLCLGHRLSARQGLALLLLMAAGACYASGGFQEPGNTLPGPRSAAGARPMPLHITPLGLLLLILYCLISGLSSVYTELIMKRQRLPLALQNLFLYTFGVILNLGLYAGSGPGPGFLEGFSGWAVLVVLNQAVNGLLMSAVMKHGSSITRLFIVSCSLVVNAVLSAVLLQLQLTATFFLAALLIGLAVCLYYGSP.

Residues 1–18 lie on the Cytoplasmic side of the membrane; sequence MSVEDGGMPGLARPKQAR. The helical transmembrane segment at 19 to 39 threads the bilayer; that stretch reads WTLMLFLSTAMYGAHAPFLAL. The Lumenal portion of the chain corresponds to 40 to 52; sequence CHVDGRVPFRPSS. A helical transmembrane segment spans residues 53 to 73; the sequence is AVLLTELTKLLLCAFSLLVGW. Residues 74–85 lie on the Cytoplasmic side of the membrane; sequence QTWPQGTPPWRQ. Residues 86–106 traverse the membrane as a helical segment; it reads AAPFALSALLYGANNNLVIYL. Residues 107–142 lie on the Lumenal side of the membrane; sequence QRYMDPSTYQVLSNLKIGSTALLYCLCLGHRLSARQ. A helical membrane pass occupies residues 143–163; it reads GLALLLLMAAGACYASGGFQE. Residues 164 to 180 are Cytoplasmic-facing; it reads PGNTLPGPRSAAGARPM. A helical membrane pass occupies residues 181–201; it reads PLHITPLGLLLLILYCLISGL. The Lumenal portion of the chain corresponds to 202 to 214; that stretch reads SSVYTELIMKRQR. The helical transmembrane segment at 215 to 235 threads the bilayer; sequence LPLALQNLFLYTFGVILNLGL. The Cytoplasmic portion of the chain corresponds to 236–248; it reads YAGSGPGPGFLEG. The chain crosses the membrane as a helical span at residues 249–271; that stretch reads FSGWAVLVVLNQAVNGLLMSAVM. The Lumenal portion of the chain corresponds to 272–279; it reads KHGSSITR. A helical transmembrane segment spans residues 280–300; the sequence is LFIVSCSLVVNAVLSAVLLQL. The Cytoplasmic segment spans residues 301 to 324; sequence QLTATFFLAALLIGLAVCLYYGSP.

This sequence belongs to the nucleotide-sugar transporter family. SLC35A subfamily. As to quaternary structure, found in a complex with SLC35A2 and SLC35A3. Expressed in the kidney, lung, testis, and prostate. Expressed in the brain by sets of neurons, such as the pyramidal cells of the cortex, the Purkinje cells of the cerebellum, and the motoneurons of the brainstem.

Its subcellular location is the golgi apparatus membrane. It catalyses the reaction CDP-L-ribitol(in) + CDP(out) = CDP-L-ribitol(out) + CDP(in). Its function is as follows. Mediates the transport of CDP-ribitol. Does not exhibit CMP-sialic acid, UDP-galactose and UDP-N-acetylglucosamine transport activity. The chain is Probable UDP-sugar transporter protein SLC35A4 from Rattus norvegicus (Rat).